Reading from the N-terminus, the 1806-residue chain is Non-reducing polyketide synthase pks12 (1806 aa).

The region spanning 30–191 is the Starter acyltransferase (SAT) domain; sequence TDTMSGMISL…TKLHLRGKVH (162 aa). The region spanning 330–755 is the Ketosynthase family 3 (KS3) domain; that stretch reads ENAIAIVGAG…GSNSALICGE (426 aa). Active-site for beta-ketoacyl synthase activity residues include cysteine 504, histidine 639, and histidine 678. The tract at residues 860–1156 is malonyl-CoA:ACP transacylase (MAT) domain; the sequence is LAFSGQSKQT…HNPSQHTFLG (297 aa). One can recognise a Malonyl-CoA:ACP transacylase (MAT) domain in the interval 862–1147; the sequence is FSGQSKQTIG…IIPMVKRATH (286 aa). Serine 947 serves as the catalytic For acyl/malonyl transferase activity. Residues 1249–1383 form an N-terminal hotdog fold region; sequence PQTPPLKLVT…GRFSVTSHID (135 aa). In terms of domain architecture, PKS/mFAS DH spans 1249 to 1558; the sequence is PQTPPLKLVT…FSRFPIAKLE (310 aa). Residues 1249–1558 are product template (PT) domain; that stretch reads PQTPPLKLVT…FSRFPIAKLE (310 aa). Histidine 1288 (proton acceptor; for dehydratase activity) is an active-site residue. The interval 1404-1558 is C-terminal hotdog fold; the sequence is SERLMAGRAY…FSRFPIAKLE (155 aa). Residue aspartate 1468 is the Proton donor; for dehydratase activity of the active site. Residues 1727 to 1804 enclose the Carrier domain; the sequence is QSKLRIRQRI…ELVDYVVISS (78 aa). The residue at position 1764 (serine 1764) is an O-(pantetheine 4'-phosphoryl)serine.

It depends on pantetheine 4'-phosphate as a cofactor.

It participates in secondary metabolite biosynthesis. Its function is as follows. Non-reducing polyketide synthase; part of the gene cluster that mediates the biosynthesis of mitorubrinol and mitorubrinic acid, two virulence factors that improve T.marneffei intracellular survival in macrophages. The two polyketide synthases pks12 and pks11 are probably responsible for sequential use in the biosynthesis of mitorubrinol and mitorubrinic acid. The first part of the biosynthesis is probably catalyzed by pks12, which synthesized orsellinic acid. This tetraketide is then used as a starter unit for pks11, which possesses a SAT domain, in the second part of the biosynthesis. Pks11, contains a methyltransferase domain, also served that methylates the products, using a methyl group from S-adenosylmethionine. The chain is Non-reducing polyketide synthase pks12 from Talaromyces marneffei (Penicillium marneffei).